The primary structure comprises 197 residues: Shikimate kinase (197 aa).

14-19 (GSGKST) provides a ligand contact to ATP. Residue serine 18 participates in Mg(2+) binding. Substrate-binding residues include aspartate 36, arginine 60, and glycine 82. Arginine 120 lines the ATP pocket. Arginine 147 lines the substrate pocket.

The protein belongs to the shikimate kinase family. Monomer. Mg(2+) is required as a cofactor.

It is found in the cytoplasm. The enzyme catalyses shikimate + ATP = 3-phosphoshikimate + ADP + H(+). It participates in metabolic intermediate biosynthesis; chorismate biosynthesis; chorismate from D-erythrose 4-phosphate and phosphoenolpyruvate: step 5/7. Its function is as follows. Catalyzes the specific phosphorylation of the 3-hydroxyl group of shikimic acid using ATP as a cosubstrate. This is Shikimate kinase from Prosthecochloris aestuarii (strain DSM 271 / SK 413).